Consider the following 480-residue polypeptide: Protein nucleotidyltransferase YdiU (480 aa).

ATP is bound by residues Gly-86, Gly-88, Arg-89, Lys-109, Asp-121, Gly-122, Arg-172, and Arg-179. Asp-248 acts as the Proton acceptor in catalysis. 2 residues coordinate Mg(2+): Asn-249 and Asp-258. Position 258 (Asp-258) interacts with ATP.

Belongs to the SELO family. It depends on Mg(2+) as a cofactor. Mn(2+) serves as cofactor.

The enzyme catalyses L-seryl-[protein] + ATP = 3-O-(5'-adenylyl)-L-seryl-[protein] + diphosphate. It catalyses the reaction L-threonyl-[protein] + ATP = 3-O-(5'-adenylyl)-L-threonyl-[protein] + diphosphate. It carries out the reaction L-tyrosyl-[protein] + ATP = O-(5'-adenylyl)-L-tyrosyl-[protein] + diphosphate. The catalysed reaction is L-histidyl-[protein] + UTP = N(tele)-(5'-uridylyl)-L-histidyl-[protein] + diphosphate. The enzyme catalyses L-seryl-[protein] + UTP = O-(5'-uridylyl)-L-seryl-[protein] + diphosphate. It catalyses the reaction L-tyrosyl-[protein] + UTP = O-(5'-uridylyl)-L-tyrosyl-[protein] + diphosphate. Nucleotidyltransferase involved in the post-translational modification of proteins. It can catalyze the addition of adenosine monophosphate (AMP) or uridine monophosphate (UMP) to a protein, resulting in modifications known as AMPylation and UMPylation. In Salmonella agona (strain SL483), this protein is Protein nucleotidyltransferase YdiU.